Here is a 193-residue protein sequence, read N- to C-terminus: Ribonuclease HII (193 aa).

Residues 3 to 192 (SLVAGIDEVG…VRAVIDRSSA (190 aa)) enclose the RNase H type-2 domain. Residues Asp-9, Glu-10, and Asp-101 each contribute to the a divalent metal cation site.

Belongs to the RNase HII family. Mn(2+) is required as a cofactor. Requires Mg(2+) as cofactor.

The protein resides in the cytoplasm. It catalyses the reaction Endonucleolytic cleavage to 5'-phosphomonoester.. In terms of biological role, endonuclease that specifically degrades the RNA of RNA-DNA hybrids. This is Ribonuclease HII from Methylococcus capsulatus (strain ATCC 33009 / NCIMB 11132 / Bath).